We begin with the raw amino-acid sequence, 250 residues long: MSPNPTPDLTTIQRQQTEKILNPIARGQVTQDLSENIILTTVDDLHNWARLSSLWPLLYGTACCFIEFAALIGSRFDFDRFGLVPRSSPRQADLIITAGTITMKMAPALVRLYEEMPEPKYVIAMGACTITGGMFSSDSTTAVRGVDKLIPVDVYIPGCPPRPEAIFDAIIKLRKKVSNETIQERATVMEQTHRYYSTTHNMKAVDPILTGKYLQTATRQTPPKELTDAIGMPIPPALASQQQKEEINRG.

Residues Cys-63, Cys-64, Cys-128, and Cys-159 each contribute to the [4Fe-4S] cluster site.

It belongs to the complex I 20 kDa subunit family. In terms of assembly, NDH-1 can be composed of about 15 different subunits; different subcomplexes with different compositions have been identified which probably have different functions. Requires [4Fe-4S] cluster as cofactor.

It is found in the cellular thylakoid membrane. It carries out the reaction a plastoquinone + NADH + (n+1) H(+)(in) = a plastoquinol + NAD(+) + n H(+)(out). It catalyses the reaction a plastoquinone + NADPH + (n+1) H(+)(in) = a plastoquinol + NADP(+) + n H(+)(out). In terms of biological role, NDH-1 shuttles electrons from an unknown electron donor, via FMN and iron-sulfur (Fe-S) centers, to quinones in the respiratory and/or the photosynthetic chain. The immediate electron acceptor for the enzyme in this species is believed to be plastoquinone. Couples the redox reaction to proton translocation, and thus conserves the redox energy in a proton gradient. Cyanobacterial NDH-1 also plays a role in inorganic carbon-concentration. The sequence is that of NAD(P)H-quinone oxidoreductase subunit K from Rippkaea orientalis (strain PCC 8801 / RF-1) (Cyanothece sp. (strain PCC 8801)).